We begin with the raw amino-acid sequence, 349 residues long: Probable dual-specificity RNA methyltransferase RlmN (349 aa).

The active-site Proton acceptor is the E94. Positions T100–D334 constitute a Radical SAM core domain. An intrachain disulfide couples C107 to C339. [4Fe-4S] cluster is bound by residues C114, C118, and C121. Residues G165–E166, S197, S220–H222, and N296 each bind S-adenosyl-L-methionine. C339 serves as the catalytic S-methylcysteine intermediate.

It belongs to the radical SAM superfamily. RlmN family. Requires [4Fe-4S] cluster as cofactor.

It is found in the cytoplasm. The catalysed reaction is adenosine(2503) in 23S rRNA + 2 reduced [2Fe-2S]-[ferredoxin] + 2 S-adenosyl-L-methionine = 2-methyladenosine(2503) in 23S rRNA + 5'-deoxyadenosine + L-methionine + 2 oxidized [2Fe-2S]-[ferredoxin] + S-adenosyl-L-homocysteine. It catalyses the reaction adenosine(37) in tRNA + 2 reduced [2Fe-2S]-[ferredoxin] + 2 S-adenosyl-L-methionine = 2-methyladenosine(37) in tRNA + 5'-deoxyadenosine + L-methionine + 2 oxidized [2Fe-2S]-[ferredoxin] + S-adenosyl-L-homocysteine. Its function is as follows. Specifically methylates position 2 of adenine 2503 in 23S rRNA and position 2 of adenine 37 in tRNAs. This is Probable dual-specificity RNA methyltransferase RlmN from Flavobacterium johnsoniae (strain ATCC 17061 / DSM 2064 / JCM 8514 / BCRC 14874 / CCUG 350202 / NBRC 14942 / NCIMB 11054 / UW101) (Cytophaga johnsonae).